We begin with the raw amino-acid sequence, 206 residues long: Small ribosomal subunit protein uS4 (206 aa).

Positions 96-160 (CRLDNVVYRM…AQLRIVQALE (65 aa)) constitute an S4 RNA-binding domain.

The protein belongs to the universal ribosomal protein uS4 family. As to quaternary structure, part of the 30S ribosomal subunit. Contacts protein S5. The interaction surface between S4 and S5 is involved in control of translational fidelity.

In terms of biological role, one of the primary rRNA binding proteins, it binds directly to 16S rRNA where it nucleates assembly of the body of the 30S subunit. Functionally, with S5 and S12 plays an important role in translational accuracy. In Pseudomonas putida (strain GB-1), this protein is Small ribosomal subunit protein uS4.